An 88-amino-acid polypeptide reads, in one-letter code: Putative membrane protein insertion efficiency factor (88 aa).

This sequence belongs to the UPF0161 family.

The protein localises to the cell inner membrane. Its function is as follows. Could be involved in insertion of integral membrane proteins into the membrane. In Koribacter versatilis (strain Ellin345), this protein is Putative membrane protein insertion efficiency factor.